The following is a 131-amino-acid chain: Profilin-5 (131 aa).

A disulfide bond links cysteine 13 and cysteine 115. The Involved in PIP2 interaction motif lies at 81-97; it reads VVIRGKKGTGGITIKKT. Threonine 111 is subject to Phosphothreonine.

Belongs to the profilin family. In terms of assembly, multimer. Occurs in many kinds of cells as a complex with monomeric actin in a 1:1 ratio. Phosphorylated by MAP kinases. In terms of tissue distribution, expressed in vegetative tissues. Present in shoots, roots and coleoptiles. Also detected in endosperm and pollen.

The protein resides in the cytoplasm. Its subcellular location is the cytoskeleton. With respect to regulation, actin binding is enhanced by calcium Ca(2+). Binds to actin and affects the structure of the cytoskeleton. At high concentrations, profilin prevents the polymerization of actin, whereas it enhances it at low concentrations. By binding to PIP2, it inhibits the formation of IP3 and DG. Has a high affinity for poly-proline. The sequence is that of Profilin-5 from Zea mays (Maize).